Reading from the N-terminus, the 346-residue chain is Phosphoribosylformylglycinamidine cyclo-ligase (346 aa).

This sequence belongs to the AIR synthase family.

Its subcellular location is the cytoplasm. The catalysed reaction is 2-formamido-N(1)-(5-O-phospho-beta-D-ribosyl)acetamidine + ATP = 5-amino-1-(5-phospho-beta-D-ribosyl)imidazole + ADP + phosphate + H(+). Its pathway is purine metabolism; IMP biosynthesis via de novo pathway; 5-amino-1-(5-phospho-D-ribosyl)imidazole from N(2)-formyl-N(1)-(5-phospho-D-ribosyl)glycinamide: step 2/2. The chain is Phosphoribosylformylglycinamidine cyclo-ligase from Geobacillus thermodenitrificans (strain NG80-2).